The following is a 357-amino-acid chain: Glucose-6-phosphatase catalytic subunit 1 (357 aa).

The Lumenal portion of the chain corresponds to 1–28 (MEKGMDVLHDFGIQSTHYLQVNYQDSQD). A helical membrane pass occupies residues 29-49 (WFILVSVIADLRNAFYVLFPI). Residues 50-60 (WFHLREAVGIK) are Cytoplasmic-facing. Residues 61-81 (LLWVAVIGDWLNLVFKWILFG) form a helical membrane-spanning segment. Topologically, residues 82-117 (QRPYWWVMDTDYYSNTSVPLIKQFPVTCETGPGSPS) are lumenal. Arginine 83 contributes to the substrate binding site. An N-linked (GlcNAc...) asparagine glycan is attached at asparagine 96. Residues 118-138 (GHAMGTAGVYYVMVTSTLSIF) traverse the membrane as a helical segment. The active-site Proton donor is histidine 119. Over 139–147 (RGRKRPTYR) the chain is Cytoplasmic. The helical transmembrane segment at 148-168 (FRCLNILLWLGFWAVQLNVCL) threads the bilayer. Topologically, residues 169–170 (SR) are lumenal. Arginine 170 serves as a coordination point for substrate. Residues 171-191 (IYLAAHFPHQVVAGVLSGIAV) traverse the membrane as a helical segment. Catalysis depends on histidine 176, which acts as the Nucleophile. Topologically, residues 192–209 (AETFRHIQSIYNASLKKY) are cytoplasmic. Residues 210–230 (FLITFFLFSFAIGFYLLLKGL) traverse the membrane as a helical segment. Residues 231–254 (GVDLLWTLEKARRWCERPEWVHID) lie on the Lumenal side of the membrane. Residues 255 to 275 (TTPFASLLKNVGTLFGLGVTL) traverse the membrane as a helical segment. The Cytoplasmic portion of the chain corresponds to 276 to 291 (NSSMYRESCKGKLSKW). The helical transmembrane segment at 292 to 312 (FPFRLSCIVVSLILLHLFDSL) threads the bilayer. Residues 313–320 (KPPSQTEL) lie on the Lumenal side of the membrane. The helical transmembrane segment at 321–341 (IFYTLSFCKSAAVPLASVSLI) threads the bilayer. Over 342–357 (PYCLARVFDQPDKKSL) the chain is Cytoplasmic. The Prevents secretion from ER signature appears at 354–357 (KKSL).

It belongs to the glucose-6-phosphatase family.

It localises to the endoplasmic reticulum membrane. The enzyme catalyses D-glucose 6-phosphate + H2O = D-glucose + phosphate. The protein operates within carbohydrate biosynthesis; gluconeogenesis. Its function is as follows. Hydrolyzes glucose-6-phosphate to glucose in the endoplasmic reticulum. Forms with the glucose-6-phosphate transporter (SLC37A4/G6PT) the complex responsible for glucose production in the terminal step of glycogenolysis and gluconeogenesis. Hence, it is the key enzyme in homeostatic regulation of blood glucose levels. This is Glucose-6-phosphatase catalytic subunit 1 (G6PC1) from Canis lupus familiaris (Dog).